Consider the following 92-residue polypeptide: uncharacterized protein (92 aa).

The tract at residues 25–53 (AGRGVRREARDTPCRGTAEGLATSQPEDG) is disordered.

This is an uncharacterized protein from Treponema pallidum (strain Nichols).